A 238-amino-acid polypeptide reads, in one-letter code: MGKRLRQQRAGRGTPTYRSRAHIHPGPAKYPPLSGDTLRGKVVELIHDPGRYVPLARVVREDGVEFLMPAAEGMYVGQIIEIGPAAKPEAGNILPLGKIPEGTEVFNVELRPGDGGKLARQAGSYALVVGRAGAKTILRLPSGKDKEVPNDSRATIGIPAGAGRIEKPIMKAGFAYHKWKVKARKWPRVRGVAMNAVDHPFGGGRHQHKGRPSTVARTAPPGRKVGHIAARRTGRRKR.

Disordered regions lie at residues 1–34 (MGKR…PPLS) and 197–238 (VDHP…RRKR). Basic residues predominate over residues 224–238 (KVGHIAARRTGRRKR).

The protein belongs to the universal ribosomal protein uL2 family. Part of the 50S ribosomal subunit. Forms a bridge to the 30S subunit in the 70S ribosome.

In terms of biological role, one of the primary rRNA binding proteins. Required for association of the 30S and 50S subunits to form the 70S ribosome, for tRNA binding and peptide bond formation. It has been suggested to have peptidyltransferase activity; this is somewhat controversial. Makes several contacts with the 16S rRNA in the 70S ribosome. The chain is Large ribosomal subunit protein uL2 from Aeropyrum pernix (strain ATCC 700893 / DSM 11879 / JCM 9820 / NBRC 100138 / K1).